Here is a 573-residue protein sequence, read N- to C-terminus: Proline--tRNA ligase (573 aa).

The protein belongs to the class-II aminoacyl-tRNA synthetase family. ProS type 1 subfamily. In terms of assembly, homodimer.

It localises to the cytoplasm. The enzyme catalyses tRNA(Pro) + L-proline + ATP = L-prolyl-tRNA(Pro) + AMP + diphosphate. Its function is as follows. Catalyzes the attachment of proline to tRNA(Pro) in a two-step reaction: proline is first activated by ATP to form Pro-AMP and then transferred to the acceptor end of tRNA(Pro). As ProRS can inadvertently accommodate and process non-cognate amino acids such as alanine and cysteine, to avoid such errors it has two additional distinct editing activities against alanine. One activity is designated as 'pretransfer' editing and involves the tRNA(Pro)-independent hydrolysis of activated Ala-AMP. The other activity is designated 'posttransfer' editing and involves deacylation of mischarged Ala-tRNA(Pro). The misacylated Cys-tRNA(Pro) is not edited by ProRS. The sequence is that of Proline--tRNA ligase from Caldanaerobacter subterraneus subsp. tengcongensis (strain DSM 15242 / JCM 11007 / NBRC 100824 / MB4) (Thermoanaerobacter tengcongensis).